Consider the following 297-residue polypeptide: MRHLLGIEGWRRDELESLLDRAKAHLPGGPDTTHLLRGKVVANLFFEDSTRTRTSFHMAAKGLGASVLNWTHTGSSVSKGETLLDTARNIEATGPVAIVMRHRSSGAPHLVAKHVKCAVINAGDGTHEHPSQALLDAFTLRQRWGSLDGRTVLIVGDVLHSRVARSNLHCLKALGAQVVMCGPPTLLPPGLESLGAEVTHNLDAALPRADAVMCLRVQLERQEQAFLPSTREYARLFGLNAAREERMKAGAVVMHPGPINRGVELAPAVADGARSVILEQVSNGVAVRRAILEVCTA.

Positions 51 and 52 each coordinate carbamoyl phosphate. Lys79 lines the L-aspartate pocket. The carbamoyl phosphate site is built by Arg101, His129, and Gln132. Residues Arg162 and Arg216 each contribute to the L-aspartate site. Residues Gly257 and Pro258 each coordinate carbamoyl phosphate.

It belongs to the aspartate/ornithine carbamoyltransferase superfamily. ATCase family. Heterododecamer (2C3:3R2) of six catalytic PyrB chains organized as two trimers (C3), and six regulatory PyrI chains organized as three dimers (R2).

The catalysed reaction is carbamoyl phosphate + L-aspartate = N-carbamoyl-L-aspartate + phosphate + H(+). Its pathway is pyrimidine metabolism; UMP biosynthesis via de novo pathway; (S)-dihydroorotate from bicarbonate: step 2/3. Functionally, catalyzes the condensation of carbamoyl phosphate and aspartate to form carbamoyl aspartate and inorganic phosphate, the committed step in the de novo pyrimidine nucleotide biosynthesis pathway. In Myxococcus xanthus (strain DK1622), this protein is Aspartate carbamoyltransferase catalytic subunit.